Consider the following 209-residue polypeptide: Thymidylate kinase (209 aa).

Position 10-17 (10-17) interacts with ATP; sequence GPEGAGKT.

This sequence belongs to the thymidylate kinase family.

The catalysed reaction is dTMP + ATP = dTDP + ADP. Phosphorylation of dTMP to form dTDP in both de novo and salvage pathways of dTTP synthesis. The protein is Thymidylate kinase of Anoxybacillus flavithermus (strain DSM 21510 / WK1).